The following is a 492-amino-acid chain: Transcription factor IIIB 60 kDa subunit (492 aa).

A TFIIB-type zinc finger spans residues 1–30 (MGCPNCGSTTFESDTASGNTYCTQCGVVVE). 4 residues coordinate Zn(2+): cysteine 3, cysteine 6, cysteine 22, and cysteine 25. The interval 440-468 (QPRKRRRYRPRDSTSDGIADTAAESAKEM) is disordered.

This sequence belongs to the TFIIB family. As to quaternary structure, TFIIIB comprises the TATA-binding protein (TBP), the B-related factor (BRF) and a third subunit (Potential). Interacts with maf1.

Its subcellular location is the nucleus. Its function is as follows. General activator of RNA polymerase III transcription. This is Transcription factor IIIB 60 kDa subunit (brf1) from Schizosaccharomyces pombe (strain 972 / ATCC 24843) (Fission yeast).